A 476-amino-acid chain; its full sequence is MNLLDPFMKMSEEQDKCLSGAPSPTMSEDSAGSPCPSGSGSDTENTRPQENTFPKGDQEMKKETEDEKFPVCIREAVSQVLKGYDWTLVPMPVRVNGSSKNKPHVKRPMNAFMVWAQAARRKLADQYPHLHNAELSKTLGKLWRLLNEGEKRPFVEEAERLRVQHKKDHPDYKYQPRRRKSVKNGQSEQDDSAEQTHISPNAIFKALQADSPHSTSSMSEVHSPGEHSGQSQGPPTPPTTPKTDVQPGKPDLKREGRPLQESGRQPPHIDFRDVDIGELSSEVISTIETFDVNEFDQYLPPNGHPGVGSAQAPYTGSYGISSTPSATTGAGSAWMSKQQQQPQQHSLSTINSEQSQSQQRTHIKTEQLSPSHYSDQQQQHSPQQLNYSSFNLQHYSSSYPTITRAQYDYTEHQGSNSYYTHASGQNSGLYSNFTYMNPSQRPMYTPIADTTGVPSIPQTHSPQHWEQPVYTQLTRP.

3 disordered regions span residues 1–67 (MNLL…TEDE), 157–197 (EAER…EQTH), and 209–274 (ADSP…FRDV). The segment covering 30 to 41 (SAGSPCPSGSGS) has biased composition (low complexity). A compositionally biased stretch (polar residues) spans 42 to 52 (DTENTRPQENT). Composition is skewed to basic and acidic residues over residues 56 to 67 (GDQEMKKETEDE) and 157 to 174 (EAER…DYKY). Lys61 is covalently cross-linked (Glycyl lysine isopeptide (Lys-Gly) (interchain with G-Cter in SUMO)). Positions 105-173 (VKRPMNAFMV…QHKKDHPDYK (69 aa)) form a DNA-binding region, HMG box. Polar residues predominate over residues 211–220 (SPHSTSSMSE). Short sequence motifs (9aaTAD) lie at residues 276-285 (IGELSSEVIS) and 291-299 (DVNEFDQYL). The tract at residues 318 to 383 (YGISSTPSAT…SDQQQQHSPQ (66 aa)) is disordered. Positions 319 to 344 (GISSTPSATTGAGSAWMSKQQQQPQQ) are enriched in low complexity. Over residues 345-360 (HSLSTINSEQSQSQQR) the composition is skewed to polar residues. Lys364 is covalently cross-linked (Glycyl lysine isopeptide (Lys-Gly) (interchain with G-Cter in SUMO)). The span at 369–383 (SPSHYSDQQQQHSPQ) shows a compositional bias: low complexity. The 9aaTAD 3 motif lies at 427-435 (SGLYSNFTY). The tract at residues 443–476 (MYTPIADTTGVPSIPQTHSPQHWEQPVYTQLTRP) is disordered. Over residues 452-476 (GVPSIPQTHSPQHWEQPVYTQLTRP) the composition is skewed to polar residues.

Interacts with the sumoylation factors ube2i/ubc9 and sumo1. Post-translationally, sumoylated. Lys-364 is the major site of sumoylation, although sumoylation at Lys-61 also occurs. Sumoylation plays a key role in regulating formation of the neural crest and otic placode.

Its subcellular location is the nucleus. It localises to the cytoplasm. Functionally, transcription factor that plays a key role in chondrocytes differentiation and skeletal development. Specifically binds the 5'-ACAAAG-3' DNA motif present in enhancers and super-enhancers and promotes expression of genes important for chondrogenesis, including COL2A1. Plays a central role in successive steps of chondrocyte differentiation. Absolutely required for precartilaginous condensation, the first step in chondrogenesis during which skeletal progenitors differentiate into prechondrocytes. Together with SOX5 and SOX6, required for overt chondrogenesis when condensed prechondrocytes differentiate into early stage chondrocytes, the second step in chondrogenesis. Later, required to direct hypertrophic maturation and block osteoblast differentiation of growth plate chondrocytes: maintains chondrocyte columnar proliferation, delays prehypertrophy and then prevents osteoblastic differentiation of chondrocytes. Also required for chondrocyte hypertrophy, both indirectly, by keeping the lineage fate of chondrocytes, and directly, by remaining present in upper hypertrophic cells. Low lipid levels are the main nutritional determinant for chondrogenic commitment of skeletal progenitor cells: when lipids levels are low, FOXO transcription factors promote expression of SOX9, which induces chondrogenic commitment and suppresses fatty acid oxidation. In addition to cartilage development, also acts as a regulator of proliferation and differentiation in epithelial stem/progenitor cells. The chain is Transcription factor Sox-9-B (sox9-b) from Xenopus laevis (African clawed frog).